A 447-amino-acid chain; its full sequence is Trigger factor (447 aa).

The 86-residue stretch at 188-273 (GDKLVIDFEG…VNDIQVAEDF (86 aa)) folds into the PPIase FKBP-type domain.

Belongs to the FKBP-type PPIase family. Tig subfamily.

It is found in the cytoplasm. The enzyme catalyses [protein]-peptidylproline (omega=180) = [protein]-peptidylproline (omega=0). Involved in protein export. Acts as a chaperone by maintaining the newly synthesized protein in an open conformation. Functions as a peptidyl-prolyl cis-trans isomerase. This is Trigger factor from Wolbachia sp. subsp. Brugia malayi (strain TRS).